A 424-amino-acid chain; its full sequence is Inhibin beta A chain (424 aa).

The signal sequence occupies residues 1–20; sequence MPLLWLRGFLLASCWIIVRS. Positions 21–308 are excised as a propeptide; it reads SPTPGSEGHG…EDHPHRRRRR (288 aa). N165 is a glycosylation site (N-linked (GlcNAc...) asparagine). Residues 264–275 show a composition bias toward basic and acidic residues; it reads EVDGDGKKKDGS. The disordered stretch occupies residues 264–306; sequence EVDGDGKKKDGSDGGLEEEKEQSHRPFLMLQARQSEDHPHRRR. Intrachain disulfides connect C312-C320, C319-C389, C348-C421, and C352-C423.

It belongs to the TGF-beta family. Dimeric, linked by one or more disulfide bonds. Inhibin A is a dimer of alpha/INHA and beta-A/INHBA. Activin A is a homodimer of beta-A/INHBA. Activin AB is a dimer of beta-A/INHBA and beta-B/INHBB. Interacts with FST and FSTL3; these interactions prevent activin A interaction to its type II receptor. Activin A interacts with ACVR2A. Activin A interacts with BMPR2. Inhibin A interacts with ACVR1; this interaction creates a non-signaling complex (NSC) that inhibits ACVR1-mediated BMP signaling. Inhibin A interacts with ACVR2A. In terms of tissue distribution, uterus, ovary and liver.

The protein localises to the secreted. Functionally, inhibins/activins are involved in regulating a number of diverse functions such as hypothalamic and pituitary hormone secretion, gonadal hormone secretion, germ cell development and maturation, erythroid differentiation, insulin secretion, nerve cell survival, embryonic axial development or bone growth, depending on their subunit composition. Its function is as follows. Activin A is a homodimer of INHBA that plays a role in several essential biological processes including embryonic development, stem cell maintenance and differentiation, haematopoiesis, cell proliferation and tissue fibrosis. Signals through type I (such as ACVR1B or ACVR1C) and type II receptors (such as ACVR2A, ACVR2B or BMPR2) which, upon ligand binding, phosphorylate SMAD2 and SMAD3 intracellular signaling mediators that form a complex with SMAD4, translocate to the nucleus and modulate gene expression. Can also activate alternative non-canonical intracellular signaling pathways including the p38 MAPK, extracellular signal-regulated kinases 1/2 (ERK1/2) and c-Jun N-terminal kinases (JNKs) to modulate cell migration and differentiation. Alternatively, promotes osteoblastic differentiation via ACVRL1-SMAD1/5/9 pathway. In addition, can engage the type I receptor ACVR1 to form an ACVR1-activin A-type II receptor non-signaling complex (NSC) that renders receptors unavailable for engagement with BMPs, hence resulting in an apparent inhibition of ACVR1-mediated BMP signaling. In terms of biological role, inhibin A is a dimer of alpha/INHA and beta-A/INHBA that functions as a feedback regulator in the hypothalamic-pituitary-gonadal (HPG) axis. Inhibits the secretion of FSH from the anterior pituitary gland by acting on pituitary gonadotrope cells. Antagonizes activin A by binding to the proteoglycan, betaglycan, and forming a stable complex with and, thereby, sequestering type II activin receptors while excluding type I receptor. The chain is Inhibin beta A chain (Inhba) from Mus musculus (Mouse).